The primary structure comprises 239 residues: Ribosome assembly factor mrt4 (239 aa).

Belongs to the universal ribosomal protein uL10 family. As to quaternary structure, associates with the pre-60S ribosomal particle.

The protein resides in the nucleus. It localises to the nucleolus. The protein localises to the cytoplasm. Functionally, component of the ribosome assembly machinery. Nuclear paralog of the ribosomal protein P0, it binds pre-60S subunits at an early stage of assembly in the nucleolus, and is replaced by P0 in cytoplasmic pre-60S subunits and mature 80S ribosomes. The protein is Ribosome assembly factor mrt4 of Candida glabrata (strain ATCC 2001 / BCRC 20586 / JCM 3761 / NBRC 0622 / NRRL Y-65 / CBS 138) (Yeast).